The primary structure comprises 95 residues: Large ribosomal subunit protein bL28 (95 aa).

It belongs to the bacterial ribosomal protein bL28 family.

The polypeptide is Large ribosomal subunit protein bL28 (Dinoroseobacter shibae (strain DSM 16493 / NCIMB 14021 / DFL 12)).